The following is a 664-amino-acid chain: Intraflagellar transport protein 70A (664 aa).

7 TPR repeats span residues 11–44 (DGEFTAVVYRLIRDARYAEAVQLLGGELQRSPRS), 45–78 (RAGLSLLGYCYYRLQEFALAAECYEQLRQLHPEL), 153–186 (LDGQVNLGCLLYKEGHYEAACSKFSAALQASGYR), 188–220 (DLSYNLALAYFSSRQYASALKHIVEIIEHGIRQ), 392–423 (LTKQVQEARHNKDDEAIKKAENEYDDTLEKYI), 424–456 (PVLMAQAKIYWNLENYPMVEKIFRKSVEFCNDH), and 458–491 (VWKLNVAHVLFMQENKYKEAIGFYEPIVKKHYDN). A coiled-coil region spans residues 507–534 (YIMTSQNEEAEELMRKIEKEEEQLSYDD). One copy of the TPR 8 repeat lies at 543 to 576 (CIVNLVIGTLYCAKGNYDFGISRVIKSLEPYNKK).

Belongs to the TTC30/dfy-1/fleer family.

The protein resides in the cell projection. The protein localises to the cilium. Its function is as follows. Required for polyglutamylation of axonemal tubulin. Plays a role in anterograde intraflagellar transport (IFT), the process by which cilia precursors are transported from the base of the cilium to the site of their incorporation at the tip. The protein is Intraflagellar transport protein 70A (IFT70A) of Bos taurus (Bovine).